The chain runs to 362 residues: Spermidine/putrescine import ATP-binding protein PotA (362 aa).

Residues 4-235 form the ABC transporter domain; the sequence is IKLDHITKQY…PVNDFVARFI (232 aa). Position 37–44 (37–44) interacts with ATP; the sequence is GPSGSGKT.

It belongs to the ABC transporter superfamily. Spermidine/putrescine importer (TC 3.A.1.11.1) family. The complex is composed of two ATP-binding proteins (PotA), two transmembrane proteins (PotB and PotC) and a solute-binding protein (PotD).

The protein localises to the cell membrane. The catalysed reaction is ATP + H2O + polyamine-[polyamine-binding protein]Side 1 = ADP + phosphate + polyamineSide 2 + [polyamine-binding protein]Side 1.. Part of the ABC transporter complex PotABCD involved in spermidine/putrescine import. Responsible for energy coupling to the transport system. The chain is Spermidine/putrescine import ATP-binding protein PotA from Lactobacillus delbrueckii subsp. bulgaricus (strain ATCC 11842 / DSM 20081 / BCRC 10696 / JCM 1002 / NBRC 13953 / NCIMB 11778 / NCTC 12712 / WDCM 00102 / Lb 14).